We begin with the raw amino-acid sequence, 197 residues long: Casparian strip membrane protein 3 (197 aa).

The Cytoplasmic segment spans residues 1-35 (MSARVDIPADTSAAAKGTAPLIAASTHVKGGYKKG). A helical membrane pass occupies residues 36–56 (LAIFDLVLRLGAVVTALAAAA). At 57–85 (TMGTTDQTLPFFTQFFQFQASYDDLPTFQ) the chain is on the extracellular side. A helical membrane pass occupies residues 86–106 (FFVIAMAIVSGYLVLSLPFSI). Residues 107–119 (VAIIRPHATGPRL) lie on the Cytoplasmic side of the membrane. The chain crosses the membrane as a helical span at residues 120 to 140 (LLIILDTVALTLNTAAAAAAV). At 141–171 (AIVDLAQNGNSSANWLGICQQFGDFCQKASG) the chain is on the extracellular side. N-linked (GlcNAc...) asparagine glycosylation occurs at N150. Residues 172-192 (AVVASFIAAGVLLFLIVISAL) form a helical membrane-spanning segment. Topologically, residues 193 to 197 (ALRKR) are cytoplasmic.

Belongs to the Casparian strip membrane proteins (CASP) family. As to quaternary structure, homodimer and heterodimers.

The protein resides in the cell membrane. Functionally, regulates membrane-cell wall junctions and localized cell wall deposition. Required for establishment of the Casparian strip membrane domain (CSD) and the subsequent formation of Casparian strips, a cell wall modification of the root endodermis that determines an apoplastic barrier between the intraorganismal apoplasm and the extraorganismal apoplasm and prevents lateral diffusion. In Populus trichocarpa (Western balsam poplar), this protein is Casparian strip membrane protein 3.